The sequence spans 499 residues: NAD(P)H-quinone oxidoreductase chain 4, chloroplastic (499 aa).

The next 14 membrane-spanning stretches (helical) occupy residues 4-24 (LPWL…IPLF), 31-51 (MIRW…TYIF), 87-107 (IGLI…AWPV), 113-130 (LLHF…GLFA), 134-154 (ILLF…LLSM), 167-187 (FLLY…SMGL), 211-231 (ILLY…FPLH), 242-262 (HYST…YGLI), 274-294 (SLFS…AALT), 305-325 (IAYS…SMTY), 330-350 (GAIL…FLVG), 386-406 (LALP…GVIT), 416-436 (IIIT…LLSM), and 462-482 (LFIL…PDLV).

It belongs to the complex I subunit 4 family.

It is found in the plastid. Its subcellular location is the chloroplast thylakoid membrane. It catalyses the reaction a plastoquinone + NADH + (n+1) H(+)(in) = a plastoquinol + NAD(+) + n H(+)(out). It carries out the reaction a plastoquinone + NADPH + (n+1) H(+)(in) = a plastoquinol + NADP(+) + n H(+)(out). This chain is NAD(P)H-quinone oxidoreductase chain 4, chloroplastic, found in Cryptomeria japonica (Japanese cedar).